The primary structure comprises 195 residues: Imidazoleglycerol-phosphate dehydratase (195 aa).

The protein belongs to the imidazoleglycerol-phosphate dehydratase family.

The protein localises to the cytoplasm. The enzyme catalyses D-erythro-1-(imidazol-4-yl)glycerol 3-phosphate = 3-(imidazol-4-yl)-2-oxopropyl phosphate + H2O. It functions in the pathway amino-acid biosynthesis; L-histidine biosynthesis; L-histidine from 5-phospho-alpha-D-ribose 1-diphosphate: step 6/9. This is Imidazoleglycerol-phosphate dehydratase from Nitrosomonas eutropha (strain DSM 101675 / C91 / Nm57).